Consider the following 181-residue polypeptide: Crossover junction endodeoxyribonuclease RuvC (181 aa).

Catalysis depends on residues Asp7, Glu67, and Asp139. Mg(2+) is bound by residues Asp7, Glu67, and Asp139.

It belongs to the RuvC family. In terms of assembly, homodimer which binds Holliday junction (HJ) DNA. The HJ becomes 2-fold symmetrical on binding to RuvC with unstacked arms; it has a different conformation from HJ DNA in complex with RuvA. In the full resolvosome a probable DNA-RuvA(4)-RuvB(12)-RuvC(2) complex forms which resolves the HJ. It depends on Mg(2+) as a cofactor.

The protein resides in the cytoplasm. The enzyme catalyses Endonucleolytic cleavage at a junction such as a reciprocal single-stranded crossover between two homologous DNA duplexes (Holliday junction).. Its function is as follows. The RuvA-RuvB-RuvC complex processes Holliday junction (HJ) DNA during genetic recombination and DNA repair. Endonuclease that resolves HJ intermediates. Cleaves cruciform DNA by making single-stranded nicks across the HJ at symmetrical positions within the homologous arms, yielding a 5'-phosphate and a 3'-hydroxyl group; requires a central core of homology in the junction. The consensus cleavage sequence is 5'-(A/T)TT(C/G)-3'. Cleavage occurs on the 3'-side of the TT dinucleotide at the point of strand exchange. HJ branch migration catalyzed by RuvA-RuvB allows RuvC to scan DNA until it finds its consensus sequence, where it cleaves and resolves the cruciform DNA. The polypeptide is Crossover junction endodeoxyribonuclease RuvC (Bordetella avium (strain 197N)).